The sequence spans 551 residues: Cleavage and polyadenylation specificity factor subunit 6 (551 aa).

The tract at residues Met1–Gly213 is necessary for interaction with NXF1. The 81-residue stretch at Ile81–Lys161 folds into the RRM domain. The tract at residues Ile81–Lys161 is necessary for interaction with NUDT21/CPSF5. Positions Ile81–Lys161 are necessary for nuclear paraspeckles localization. Residue Thr157 is modified to Phosphothreonine. The segment covering Met169–Met180 has biased composition (polar residues). 2 disordered regions span residues Met169–Glu411 and Leu477–Arg551. Residues Arg202–Arg206 carry the GAR motif. A compositionally biased stretch (low complexity) spans Phe207 to Gly219. Pro residues-rich tracts occupy residues Pro220 to Gly265, Gly285 to Thr366, and Gly377 to Pro388. A compositionally biased stretch (basic and acidic residues) spans Pro389 to Thr404. Thr404 and Thr407 each carry phosphothreonine. Positions Thr404–Arg551 are sufficient for nuclear speckle localization. Residues Ala405 to Arg551 are necessary for RNA-binding. The tract at residues Glu481–Arg551 is necessary for interaction with SRSF3, SRSF7 and TRA2B/SFRS10. The span at Ser489–Arg503 shows a compositional bias: basic and acidic residues. The tract at residues Arg490–Arg551 is arg/Ser-rich domain. Phosphoserine occurs at positions 494, 500, 511, 513, and 525. A compositionally biased stretch (basic residues) spans Glu504 to Arg514. Residues Lys510 to Arg551 are sufficient for nuclear targeting. Over residues Asp515–Arg551 the composition is skewed to basic and acidic residues.

This sequence belongs to the RRM CPSF6/7 family. Component of the cleavage factor Im (CFIm) complex which is a heterotetramer composed of two subunits of NUDT21/CPSF5 and two subunits of CPSF6 or CPSF7 or a heterodimer of CPSF6 and CPSF7. The cleavage factor Im (CFIm) complex associates with the CPSF and CSTF complexes to promote the assembly of the core mRNA 3'-processing machinery. Associates with the exon junction complex (EJC). Associates with the 80S ribosome particle. Interacts (via the RRM domain) with NUDT21/CPSF5; this interaction is direct and enhances binding to RNA. Interacts (via Arg/Ser-rich domain) with FIP1L1 (preferentially via unphosphorylated form and Arg/Glu/Asp-rich domain); this interaction mediates, at least in part, the interaction between the CFIm and CPSF complexes and may be inhibited by CPSF6 hyper-phosphorylation. Interacts (via N-terminus) with NXF1; this interaction is direct. Interacts with SRSF3. Interacts with SRSF7. Interacts with SNRNP70. Interacts with TRA2B/SFRS10. Interacts with UPF1. Interacts with UPF3B. Interacts with VIRMA. Interacts (via Arg/Ser-rich domain) with TNPO3; promoting nuclear import of CPSF6 independently of its phosphorylation status. Interacts with YTHDC1. In terms of processing, phosphorylated. Phosphorylated in the Arg/Ser-rich domain by SRPK1, in vitro. Symmetrically dimethylated on arginine residues in the GAR motif by PRMT5 in a WDR77- and CLNS1A-dependent manner. Asymmetrically dimethylated on arginine residues in the GAR motif by PRMT1.

It localises to the nucleus. It is found in the nucleoplasm. The protein localises to the nucleus speckle. Its subcellular location is the cytoplasm. Its function is as follows. Component of the cleavage factor Im (CFIm) complex that functions as an activator of the pre-mRNA 3'-end cleavage and polyadenylation processing required for the maturation of pre-mRNA into functional mRNAs. CFIm contributes to the recruitment of multiprotein complexes on specific sequences on the pre-mRNA 3'-end, so called cleavage and polyadenylation signals (pA signals). Most pre-mRNAs contain multiple pA signals, resulting in alternative cleavage and polyadenylation (APA) producing mRNAs with variable 3'-end formation. The CFIm complex acts as a key regulator of cleavage and polyadenylation site choice during APA through its binding to 5'-UGUA-3' elements localized in the 3'-untranslated region (UTR) for a huge number of pre-mRNAs. CPSF6 enhances NUDT21/CPSF5 binding to 5'-UGUA-3' elements localized upstream of pA signals and promotes RNA looping, and hence activates directly the mRNA 3'-processing machinery. Plays a role in mRNA export. The polypeptide is Cleavage and polyadenylation specificity factor subunit 6 (Bos taurus (Bovine)).